The sequence spans 342 residues: Probable long-chain-alcohol O-fatty-acyltransferase 3 (342 aa).

The next 8 membrane-spanning stretches (helical) occupy residues 9–29, 36–56, 58–78, 115–135, 153–173, 227–247, 255–275, and 297–317; these read IKLW…STGI, LLSV…FSYV, FSGC…ILFS, IPIW…QMYE, IFLE…ITLG, MFLG…MLFF, TGEV…EVAV, and VGFV…SGII.

This sequence belongs to the wax synthase family.

The protein resides in the membrane. It carries out the reaction a long chain fatty alcohol + a fatty acyl-CoA = a wax ester + CoA. Functionally, catalyzes the final step in the synthesis of long-chain linear esters (waxes). This chain is Probable long-chain-alcohol O-fatty-acyltransferase 3 (AT3), found in Arabidopsis thaliana (Mouse-ear cress).